The chain runs to 248 residues: Coproheme decarboxylase (248 aa).

Residues arginine 130, tyrosine 144, tyrosine 144–lysine 148, lysine 148, histidine 171, glutamine 184, and serine 222 each bind Fe-coproporphyrin III. The active site involves tyrosine 144.

This sequence belongs to the ChdC family. Type 1 subfamily. As to quaternary structure, homopentamer. Requires Fe-coproporphyrin III as cofactor.

It catalyses the reaction Fe-coproporphyrin III + 2 H2O2 + 2 H(+) = heme b + 2 CO2 + 4 H2O. The enzyme catalyses Fe-coproporphyrin III + H2O2 + H(+) = harderoheme III + CO2 + 2 H2O. The catalysed reaction is harderoheme III + H2O2 + H(+) = heme b + CO2 + 2 H2O. Its pathway is porphyrin-containing compound metabolism; protoheme biosynthesis. Involved in coproporphyrin-dependent heme b biosynthesis. Catalyzes the decarboxylation of Fe-coproporphyrin III (coproheme) to heme b (protoheme IX), the last step of the pathway. The reaction occurs in a stepwise manner with a three-propionate harderoheme intermediate. This is Coproheme decarboxylase from Geobacillus stearothermophilus (strain DSM 13240 / CIP 106956 / 10).